We begin with the raw amino-acid sequence, 478 residues long: Mannose-1-phosphate guanylyltransferase (478 aa).

Belongs to the mannose-6-phosphate isomerase type 2 family.

The enzyme catalyses alpha-D-mannose 1-phosphate + GTP + H(+) = GDP-alpha-D-mannose + diphosphate. Its pathway is nucleotide-sugar biosynthesis; GDP-alpha-D-mannose biosynthesis; GDP-alpha-D-mannose from alpha-D-mannose 1-phosphate (GTP route): step 1/1. Its function is as follows. Involved in the biosynthesis of the capsular polysaccharide colanic acid. This Escherichia coli (strain K12) protein is Mannose-1-phosphate guanylyltransferase (manC).